The following is a 104-amino-acid chain: Large ribosomal subunit protein bL21 (104 aa).

Belongs to the bacterial ribosomal protein bL21 family. In terms of assembly, part of the 50S ribosomal subunit. Contacts protein L20.

Its function is as follows. This protein binds to 23S rRNA in the presence of protein L20. In Desulfosudis oleivorans (strain DSM 6200 / JCM 39069 / Hxd3) (Desulfococcus oleovorans), this protein is Large ribosomal subunit protein bL21.